We begin with the raw amino-acid sequence, 462 residues long: Glycine--tRNA ligase (462 aa).

2 residues coordinate substrate: Arg-100 and Glu-174. Residues 206–208, 216–221, 290–291, and 334–337 each bind ATP; these read RNE, FRTREF, EL, and GADR. Residue 221-225 coordinates substrate; that stretch reads FEQME. 330-334 lines the substrate pocket; sequence EPSLG.

This sequence belongs to the class-II aminoacyl-tRNA synthetase family. In terms of assembly, homodimer.

It is found in the cytoplasm. The catalysed reaction is tRNA(Gly) + glycine + ATP = glycyl-tRNA(Gly) + AMP + diphosphate. Functionally, catalyzes the attachment of glycine to tRNA(Gly). The chain is Glycine--tRNA ligase from Ruminiclostridium cellulolyticum (strain ATCC 35319 / DSM 5812 / JCM 6584 / H10) (Clostridium cellulolyticum).